Consider the following 72-residue polypeptide: Translation initiation factor IF-1 (72 aa).

The S1-like domain maps to 1–72 (MAKEDVIEIE…TRGRITYRFK (72 aa)).

It belongs to the IF-1 family. Component of the 30S ribosomal translation pre-initiation complex which assembles on the 30S ribosome in the order IF-2 and IF-3, IF-1 and N-formylmethionyl-tRNA(fMet); mRNA recruitment can occur at any time during PIC assembly.

It is found in the cytoplasm. One of the essential components for the initiation of protein synthesis. Stabilizes the binding of IF-2 and IF-3 on the 30S subunit to which N-formylmethionyl-tRNA(fMet) subsequently binds. Helps modulate mRNA selection, yielding the 30S pre-initiation complex (PIC). Upon addition of the 50S ribosomal subunit IF-1, IF-2 and IF-3 are released leaving the mature 70S translation initiation complex. This Streptococcus suis (strain 05ZYH33) protein is Translation initiation factor IF-1.